The sequence spans 651 residues: Protein cueball (651 aa).

The first 21 residues, 1–21 (MILRLFILLSIITVYLQLSVG), serve as a signal peptide directing secretion. Over 22–540 (IQQQFEFAIT…VCLAPNAWTG (519 aa)) the chain is Extracellular. Residues Asn-77, Asn-102, and Asn-114 are each glycosylated (N-linked (GlcNAc...) asparagine). LDL-receptor class B repeat units lie at residues 115 to 162 (RTIY…DICG), 163 to 207 (RKLY…DQGA), and 208 to 253 (KRIF…TRNA). A glycan (N-linked (GlcNAc...) asparagine) is linked at Asn-183. A disordered region spans residues 290–311 (VEGEEGTGAMDDNDIWPVGDFE). N-linked (GlcNAc...) asparagine glycosylation occurs at Asn-324. EGF-like domains are found at residues 374 to 408 (QLDE…TRCE), 409 to 440 (TNEC…YSGE), and 443 to 480 (EVKK…LRCE). Disulfide bonds link Cys-383–Cys-396, Cys-398–Cys-407, Cys-412–Cys-421, Cys-416–Cys-431, Cys-447–Cys-457, Cys-451–Cys-468, and Cys-470–Cys-479. N-linked (GlcNAc...) asparagine glycans are attached at residues Asn-482 and Asn-499. The chain crosses the membrane as a helical span at residues 541–561 (SVLMPLMISLILILLLLTIFI). Over 562-651 (HGLRRLYKPK…LIHNMEDDLY (90 aa)) the chain is Cytoplasmic.

Belongs to the cueball family.

The protein resides in the cell membrane. Its function is as follows. Has a role in spermatogenesis and oogenesis. The sequence is that of Protein cueball from Drosophila willistoni (Fruit fly).